Consider the following 424-residue polypeptide: 26S proteasome regulatory subunit 4 homolog (424 aa).

Positions 1 to 11 (MSRDKSERDNL) are enriched in basic and acidic residues. The tract at residues 1–33 (MSRDKSERDNLQDTTTINLRRRRRVKEGKAASK) is disordered. 210-217 (GLPGTGKT) lines the ATP pocket.

The protein belongs to the AAA ATPase family. The 26S proteasome consists of a 20S proteasome core and two 19S regulatory subunits. The 20S proteasome core is composed of 28 subunits that are arranged in four stacked rings, resulting in a barrel-shaped structure. The two end rings are each formed by seven alpha subunits, and the two central rings are each formed by seven beta subunits. The catalytic chamber with the active sites is on the inside of the barrel.

The protein localises to the cytoplasm. Its subcellular location is the nucleus. Its function is as follows. Acts as a regulatory subunit of the 26S proteasome which degrades poly-ubiquitinated proteins in the cytoplasm and in the nucleus. It is essential for the regulated turnover of proteins and for the removal of misfolded proteins. The proteasome is a multicatalytic proteinase complex that is characterized by its ability to cleave peptides with Arg, Phe, Tyr, Leu, and Glu adjacent to the leaving group at neutral or slightly basic pH. The chain is 26S proteasome regulatory subunit 4 homolog (RPT2) from Encephalitozoon cuniculi (strain GB-M1) (Microsporidian parasite).